The primary structure comprises 226 residues: Putative uroporphyrinogen-III synthase (226 aa).

The protein belongs to the uroporphyrinogen-III synthase family.

The catalysed reaction is hydroxymethylbilane = uroporphyrinogen III + H2O. It functions in the pathway porphyrin-containing compound metabolism; protoporphyrin-IX biosynthesis; coproporphyrinogen-III from 5-aminolevulinate: step 3/4. Catalyzes cyclization of the linear tetrapyrrole, hydroxymethylbilane, to the macrocyclic uroporphyrinogen III. The protein is Putative uroporphyrinogen-III synthase of Archaeoglobus fulgidus (strain ATCC 49558 / DSM 4304 / JCM 9628 / NBRC 100126 / VC-16).